We begin with the raw amino-acid sequence, 220 residues long: 14-3-3-like protein (220 aa).

It belongs to the 14-3-3 family.

The polypeptide is 14-3-3-like protein (Spinacia oleracea (Spinach)).